The sequence spans 150 residues: UPF0756 membrane protein ABSDF1616 (150 aa).

A run of 4 helical transmembrane segments spans residues 1–21 (MLAQ…CGLL), 45–65 (FFPY…TIGV), 83–103 (FISF…WLGG), and 115–135 (VVAG…GVPV).

It belongs to the UPF0756 family.

It localises to the cell membrane. The protein is UPF0756 membrane protein ABSDF1616 of Acinetobacter baumannii (strain SDF).